The primary structure comprises 445 residues: Trigger factor (445 aa).

The 86-residue stretch at 163–248 folds into the PPIase FKBP-type domain; sequence GDTVVIDYVG…IHEVKVKELP (86 aa). Residues 425-445 form a disordered region; sequence KEVESAKDDADKEASDAKADK.

The protein belongs to the FKBP-type PPIase family. Tig subfamily.

The protein resides in the cytoplasm. The enzyme catalyses [protein]-peptidylproline (omega=180) = [protein]-peptidylproline (omega=0). Its function is as follows. Involved in protein export. Acts as a chaperone by maintaining the newly synthesized protein in an open conformation. Functions as a peptidyl-prolyl cis-trans isomerase. This Lacticaseibacillus casei (strain BL23) (Lactobacillus casei) protein is Trigger factor.